Consider the following 483-residue polypeptide: Probable gamma-aminobutyrate transaminase 4 (483 aa).

138–139 (GS) contributes to the pyridoxal 5'-phosphate binding site. Tyr171 serves as a coordination point for substrate. Asp278 contacts pyridoxal 5'-phosphate. Lys307 provides a ligand contact to substrate. Lys307 carries the post-translational modification N6-(pyridoxal phosphate)lysine.

Belongs to the class-III pyridoxal-phosphate-dependent aminotransferase family. As to expression, not detected in roots, stems, flowers or leaves of healthy plants.

It localises to the cytoplasm. It catalyses the reaction 4-aminobutanoate + pyruvate = succinate semialdehyde + L-alanine. The enzyme catalyses 4-aminobutanoate + glyoxylate = succinate semialdehyde + glycine. In terms of biological role, transaminase that degrades gamma-amino butyric acid (GABA). The sequence is that of Probable gamma-aminobutyrate transaminase 4 (GABA-T) from Oryza sativa subsp. japonica (Rice).